The following is a 1759-amino-acid chain: Histone-lysine N-methyltransferase ASHH2 (1759 aa).

Basic and acidic residues-rich tracts occupy residues 154-165 (QEKEAPQAKEDE), 197-206 (ETTKHIKPDE), and 215-224 (RFDDGGKEGR). Disordered stretches follow at residues 154–181 (QEKE…GIDT), 197–237 (ETTK…GSSD), 437–482 (CEAG…IESI), 515–556 (SNNI…NRNI), and 738–816 (DELR…VGRI). The segment covering 462–472 (SARHLRKSSRK) has biased composition (basic residues). Over residues 530–556 (RSQGNLNNGEHNRSSHNGNVEGSNRNI) the composition is skewed to polar residues. Residues 758 to 775 (KKAKHPKSKSNGTKKGKS) show a composition bias toward basic residues. Composition is skewed to basic and acidic residues over residues 776–797 (KFSE…EQRK) and 804–816 (GRDD…VGRI). A CW-type zinc finger spans residues 859–912 (YSTESAWVRCDDCFKWRRIPASVVGSIDESSRWICMNNSDKRFADCSKSQEMSN). Residues cysteine 868, cysteine 871, cysteine 893, and cysteine 904 each contribute to the Zn(2+) site. Positions 974–1024 (DEIMVCHCKPSPDGRLGCGEECLNRMLNIECLQGTCPAGDLCSNQQFQKRK) constitute an AWS domain. Residues 1026 to 1143 (VKFERFQSGK…KGQELTFDYN (118 aa)) enclose the SET domain. An S-adenosyl-L-methionine-binding site is contributed by tyrosine 1142. Residues 1151-1167 (AAKKCYCGSSHCRGYIG) enclose the Post-SET domain. Disordered stretches follow at residues 1225–1253 (GYKD…PPPL), 1271–1345 (AVQQ…PGVN), 1496–1606 (ERSE…FSSP), and 1727–1759 (KQSV…KLNS). Residues 1232–1241 (DNTQTQSSVS) show a composition bias toward polar residues. Residues 1284-1293 (STSPTSSSLS) show a composition bias toward low complexity. Positions 1304–1316 (KTTKHGSGEDKKI) are enriched in basic and acidic residues. Basic residues predominate over residues 1317–1326 (LPRPRPRMKT). Positions 1511 to 1521 (ASQEPRYDHQS) are enriched in basic and acidic residues. A compositionally biased stretch (polar residues) spans 1530–1556 (SVTSSKAATPETASVSEGYSEPNSGLP). A compositionally biased stretch (basic and acidic residues) spans 1566-1577 (RWDQPSKTKEQR). Over residues 1581 to 1594 (ILSQQTDETNGNQD) the composition is skewed to polar residues.

It belongs to the class V-like SAM-binding methyltransferase superfamily. Histone-lysine methyltransferase family. SET2 subfamily. Interacts with FRI and SUF4, two components of the transcription activator complex FRI-C, and with SWC6, a component of the SWR1 chromatin-remodeling complex. Interacts with BZR2/BES1 and IWS1. As to expression, ubiquitous, with higher levels in young tissues, including shoot and root apex. Expressed in ovules, tapetum layer and microspores.

The protein localises to the nucleus. The protein resides in the chromosome. It is found in the centromere. It catalyses the reaction N(6)-methyl-L-lysyl(36)-[histone H3] + S-adenosyl-L-methionine = N(6),N(6)-dimethyl-L-lysyl(36)-[histone H3] + S-adenosyl-L-homocysteine + H(+). It carries out the reaction N(6),N(6)-dimethyl-L-lysyl(36)-[histone H3] + S-adenosyl-L-methionine = N(6),N(6),N(6)-trimethyl-L-lysyl(36)-[histone H3] + S-adenosyl-L-homocysteine + H(+). Functionally, histone methyltransferase involved in di and tri-methylation of 'Lys-36' of histone H3 (H3K36me2 and H3K36me3). Binds to H3 already mono- or di-methylated on 'Lys-4'(H3K4me1 or H3K4me2), but not to H3K4me3. H3K4me and H3K36me represent specific tags for epigenetic transcriptional activation. Positively regulates FLC transcription to prevent early flowering transition. Required for flowering transition in response to vernalization and for the maintenance of FLC expression in late embryos, but dispensable for the initial reactivation in early embryos during reprogramming. Also seems to modulate several traits including floral organ size, root size and dormancy. Promotes apical dominance. Directly involved in the tri-methylation of 'Lys-36' of histone H3 (H3K36me3) at LAZ5 chromatin to maintain a transcriptionally active state of LAZ5, a TIR-NB-LRR protein involved in innate immunity. Required for brassinosteroid (BR)-induced gene expression and histone H3 trimethylation on 'Lys-36' (H3K36me3) in BR-regulated genes. In Arabidopsis thaliana (Mouse-ear cress), this protein is Histone-lysine N-methyltransferase ASHH2.